We begin with the raw amino-acid sequence, 673 residues long: UvrABC system protein B (673 aa).

A Helicase ATP-binding domain is found at 26–183 (EGLEDGLAHQ…RRLAELQYTR (158 aa)). 39–46 (GVTGSGKT) serves as a coordination point for ATP. The Beta-hairpin signature appears at 92 to 115 (YYDYYQPEAYVPSSDTFIEKDASV). Residues 431-597 (QVDDLLSEIR…GLNKKVVDIL (167 aa)) form the Helicase C-terminal domain. Residues 633–668 (QQKIHELEGQMMQHAQNLEFEEAAQIRDQLHQLREL) form the UVR domain.

It belongs to the UvrB family. As to quaternary structure, forms a heterotetramer with UvrA during the search for lesions. Interacts with UvrC in an incision complex.

Its subcellular location is the cytoplasm. Functionally, the UvrABC repair system catalyzes the recognition and processing of DNA lesions. A damage recognition complex composed of 2 UvrA and 2 UvrB subunits scans DNA for abnormalities. Upon binding of the UvrA(2)B(2) complex to a putative damaged site, the DNA wraps around one UvrB monomer. DNA wrap is dependent on ATP binding by UvrB and probably causes local melting of the DNA helix, facilitating insertion of UvrB beta-hairpin between the DNA strands. Then UvrB probes one DNA strand for the presence of a lesion. If a lesion is found the UvrA subunits dissociate and the UvrB-DNA preincision complex is formed. This complex is subsequently bound by UvrC and the second UvrB is released. If no lesion is found, the DNA wraps around the other UvrB subunit that will check the other stand for damage. This chain is UvrABC system protein B, found in Klebsiella pneumoniae subsp. pneumoniae (strain ATCC 700721 / MGH 78578).